A 336-amino-acid polypeptide reads, in one-letter code: Dihydroorotate dehydrogenase (quinone) (336 aa).

FMN is bound by residues 62 to 66 (AGLDK) and Thr-86. Lys-66 lines the substrate pocket. 111–115 (NRMGF) provides a ligand contact to substrate. Asn-139 and Asn-172 together coordinate FMN. Residue Asn-172 coordinates substrate. The Nucleophile role is filled by Ser-175. Asn-177 contributes to the substrate binding site. Lys-217 and Thr-245 together coordinate FMN. Residue 246–247 (NT) coordinates substrate. FMN-binding positions include Gly-268, Gly-297, and 318-319 (YS).

This sequence belongs to the dihydroorotate dehydrogenase family. Type 2 subfamily. Monomer. FMN serves as cofactor.

The protein localises to the cell membrane. It catalyses the reaction (S)-dihydroorotate + a quinone = orotate + a quinol. It participates in pyrimidine metabolism; UMP biosynthesis via de novo pathway; orotate from (S)-dihydroorotate (quinone route): step 1/1. Catalyzes the conversion of dihydroorotate to orotate with quinone as electron acceptor. In Vibrio atlanticus (strain LGP32) (Vibrio splendidus (strain Mel32)), this protein is Dihydroorotate dehydrogenase (quinone).